We begin with the raw amino-acid sequence, 322 residues long: Tetraacyldisaccharide 4'-kinase (322 aa).

40–47 (CVGGTGKT) contacts ATP.

It belongs to the LpxK family.

It carries out the reaction a lipid A disaccharide + ATP = a lipid IVA + ADP + H(+). It participates in glycolipid biosynthesis; lipid IV(A) biosynthesis; lipid IV(A) from (3R)-3-hydroxytetradecanoyl-[acyl-carrier-protein] and UDP-N-acetyl-alpha-D-glucosamine: step 6/6. In terms of biological role, transfers the gamma-phosphate of ATP to the 4'-position of a tetraacyldisaccharide 1-phosphate intermediate (termed DS-1-P) to form tetraacyldisaccharide 1,4'-bis-phosphate (lipid IVA). This is Tetraacyldisaccharide 4'-kinase from Koribacter versatilis (strain Ellin345).